A 461-amino-acid polypeptide reads, in one-letter code: tRNA modification GTPase MnmE (461 aa).

(6S)-5-formyl-5,6,7,8-tetrahydrofolate contacts are provided by R27, E89, and R128. The TrmE-type G domain maps to 224 to 382 (GLATAIVGRP…LEELINKLFF (159 aa)). A K(+)-binding site is contributed by N234. GTP is bound by residues 234-239 (NVGKSS), 253-259 (TDVAGTT), and 278-281 (DTAG). S238 provides a ligand contact to Mg(2+). T253, V255, and T258 together coordinate K(+). Residue T259 coordinates Mg(2+). Residue K461 participates in (6S)-5-formyl-5,6,7,8-tetrahydrofolate binding.

This sequence belongs to the TRAFAC class TrmE-Era-EngA-EngB-Septin-like GTPase superfamily. TrmE GTPase family. Homodimer. Heterotetramer of two MnmE and two MnmG subunits. K(+) is required as a cofactor.

It is found in the cytoplasm. Functionally, exhibits a very high intrinsic GTPase hydrolysis rate. Involved in the addition of a carboxymethylaminomethyl (cmnm) group at the wobble position (U34) of certain tRNAs, forming tRNA-cmnm(5)s(2)U34. This chain is tRNA modification GTPase MnmE, found in Lactobacillus helveticus (strain DPC 4571).